Reading from the N-terminus, the 569-residue chain is Proline--tRNA ligase (569 aa).

It belongs to the class-II aminoacyl-tRNA synthetase family. ProS type 1 subfamily. As to quaternary structure, homodimer.

It is found in the cytoplasm. The catalysed reaction is tRNA(Pro) + L-proline + ATP = L-prolyl-tRNA(Pro) + AMP + diphosphate. Catalyzes the attachment of proline to tRNA(Pro) in a two-step reaction: proline is first activated by ATP to form Pro-AMP and then transferred to the acceptor end of tRNA(Pro). As ProRS can inadvertently accommodate and process non-cognate amino acids such as alanine and cysteine, to avoid such errors it has two additional distinct editing activities against alanine. One activity is designated as 'pretransfer' editing and involves the tRNA(Pro)-independent hydrolysis of activated Ala-AMP. The other activity is designated 'posttransfer' editing and involves deacylation of mischarged Ala-tRNA(Pro). The misacylated Cys-tRNA(Pro) is not edited by ProRS. This chain is Proline--tRNA ligase, found in Nitratiruptor sp. (strain SB155-2).